The chain runs to 537 residues: MEKKECPEKSSSSEEELPRRDSGSSRNIDASKLIRLQGSRKLLVDNSIRELQYTKTGIFFQAEACVTNDTVYRELPCVSETLCDISHFFQEDDETEAEPLLFRAVPECQLSGGDIPSVSEEQESSEGQDSGDICSEENQIVSSYASKVCFEIEEDYKNRQFLGPEGNVDVELIDKSTNRYSVWFPTAGWYLWSATGLGFLVRDEVTVTIAFGSWSQHLALDLQHHEQWLVGGPLFDVTAEPEEAVAEIHLPHFISLQAGEVDVSWFLVAHFKNEGMVLEHPARVEPFYAVLESPSFSLMGILLRIASGTRLSIPITSNTLIYYHPHPEDIKFHLYLVPSDALLTKAIDDEEDRFHGVRLQTSPPMEPLNFGSSYIVSNSANLKVMPKELKLSYRSPGEIQHFSKFYAGQMKEPIQLEITEKRHGTLVWDTEVKPVDLQLVAASAPPPFSGAAFVKENHRQLQARMGDLKGVLDDLQDNEVLTENEKELVEQEKTRQSKNEALLSMVEKKGDLALDVLFRSISERDPYLVSYLRQQNL.

The span at 1-23 (MEKKECPEKSSSSEEELPRRDSG) shows a compositional bias: basic and acidic residues. Disordered regions lie at residues 1–28 (MEKKECPEKSSSSEEELPRRDSGSSRNI) and 113–133 (GDIPSVSEEQESSEGQDSGDI). The segment at 161–296 (FLGPEGNVDV…FYAVLESPSF (136 aa)) is ZU5. The 286-residue stretch at 161–446 (FLGPEGNVDV…LQLVAASAPP (286 aa)) folds into the FIIND domain. The interval 297–446 (SLMGILLRIA…LQLVAASAPP (150 aa)) is UPA. The region spanning 446-536 (PPFSGAAFVK…YLVSYLRQQN (91 aa)) is the CARD domain.

In terms of assembly, interacts with DPP9; leading to inhibit activation of the inflammasome. DPP9 acts via formation of a ternary complex, composed of a DPP9 homodimer, one full-length CARD8 protein, and one cleaved C-terminus of CARD8 (Caspase recruitment domain-containing protein 8, C-terminus). Interacts with DPP8; leading to inhibit activation of the inflammasome, probably via formation of a ternary complex with DPP8. Interacts with NLRP3. Interacts with IKBKG/NEMO. Interacts with DRAL. Binds to caspase-1 (CASP1), CARD16/pseudo-ICE and CARD18/ICEBERG. Interacts with NLRP2 (via NACHT domain). Interacts with the C-terminal part of CARD8 (Caspase recruitment domain-containing protein 8, C-terminus) in absence of pathogens and other damage-associated signals. As to quaternary structure, interacts with the N-terminal part of CARD8 (Caspase recruitment domain-containing protein 8, N-terminus) in absence of pathogens and other damage-associated signals. Homomultimer; forms the CARD8 inflammasome polymeric complex, a filament composed of homopolymers of this form in response to pathogens and other damage-associated signals. The CARD8 inflammasome polymeric complex directly recruits pro-caspase-1 (proCASP1) independently of PYCARD/ASC. Interacts (via CARD domain) with CASP1 (via CARD domain); leading to CASP1 activation. Post-translationally, undergoes autocatalytic processing within the FIIND domain to generate the N-terminal and C-terminal parts, which are associated non-covalently in absence of pathogens and other damage-associated signals. In terms of processing, ubiquitinated by the N-end rule pathway in response to pathogens and other damage-associated signals, leading to its degradation by the proteasome and subsequent release of the cleaved C-terminal part of the protein (Caspase recruitment domain-containing protein 8, C-terminus), which polymerizes and forms the CARD8 inflammasome. (Microbial infection) Proteolytic cleavage by HIV-1 protease in the disordered region and within the ZU5 region of the FIIND domain promotes ubiquitination of the N-terminal part by the N-end rule pathway and degradation by the proteasome, releasing the cleaved C-terminal part of the protein (Caspase recruitment domain-containing protein 8, C-terminus), which polymerizes and forms the CARD8 inflammasome. Post-translationally, undergoes less autocatalytic processing within the FIIND domain compared to isoform 5. In terms of tissue distribution, high expression in lung, ovary, testis and placenta. Lower expression in heart, kidney and liver. Also expressed in spleen, lymph node and bone marrow.

It is found in the cytoplasm. The protein resides in the nucleus. The protein localises to the inflammasome. CARD8 inflammasome is activated by HIV-1 protease activity: HIV-1 protease cleaves CARD8, promoting ubiquitination and degradation of the N-terminal part, releasing the cleaved C-terminal part of the protein (Caspase recruitment domain-containing protein 8, C-terminus), which polymerizes and forms the CARD8 inflammasome. CARD8 inflammasome is inhibited by DPP8 and DPP9, which sequester the C-terminal fragment of CARD8 (Caspase recruitment domain-containing protein 8, C-terminus) in a ternary complex, thereby preventing CARD8 oligomerization and activation. CARD8 inflammasome is activated by Val-boroPro (Talabostat, PT-100), an inhibitor of dipeptidyl peptidases DPP8 and DPP9. Val-boroPro relieves inhibition of DPP8 and/or DPP9 by inducing the proteasome-mediated destruction of the N-terminal part of CARD8, releasing its C-terminal part from autoinhibition. Indirectly activated by the pseudodipeptide CQ31. CQ31 directly inactivates the peptidases PEPD and XPNPEP1, leading to an accumulation of dipeptides that weaky inhibit DDP8 and DPP9, relieving DPP8- and/or DPP9-mediated inhibition of CARD8. In terms of biological role, inflammasome sensor, which mediates inflammasome activation in response to various pathogen-associated signals, leading to subsequent pyroptosis of CD4(+) T-cells and macrophages. Inflammasomes are supramolecular complexes that assemble in the cytosol in response to pathogens and other damage-associated signals and play critical roles in innate immunity and inflammation. Acts as a recognition receptor (PRR): recognizes specific pathogens and other damage-associated signals, such as HIV-1 protease activity or Val-boroPro inhibitor, and mediates CARD8 inflammasome activation. In response to pathogen-associated signals, the N-terminal part of CARD8 is degraded by the proteasome, releasing the cleaved C-terminal part of the protein (Caspase recruitment domain-containing protein 8, C-terminus), which polymerizes to initiate the formation of the inflammasome complex: the CARD8 inflammasome directly recruits pro-caspase-1 (proCASP1) independently of PYCARD/ASC and promotes caspase-1 (CASP1) activation, which subsequently cleaves and activates inflammatory cytokines IL1B and IL18 and gasdermin-D (GSDMD), leading to pyroptosis. Ability to sense HIV-1 protease activity leads to the clearance of latent HIV-1 in patient CD4(+) T-cells after viral reactivation; in contrast, HIV-1 can evade CARD8-sensing when its protease remains inactive in infected cells prior to viral budding. Also acts as a negative regulator of the NLRP3 inflammasome. May also act as an inhibitor of NF-kappa-B activation. Functionally, constitutes the precursor of the CARD8 inflammasome, which mediates autoproteolytic processing within the FIIND domain to generate the N-terminal and C-terminal parts, which are associated non-covalently in absence of pathogens and other damage-associated signals. Its function is as follows. Regulatory part that prevents formation of the CARD8 inflammasome: in absence of pathogens and other damage-associated signals, interacts with the C-terminal part of CARD8 (Caspase recruitment domain-containing protein 8, C-terminus), preventing activation of the CARD8 inflammasome. In response to pathogen-associated signals, this part is ubiquitinated by the N-end rule pathway and degraded by the proteasome, releasing the cleaved C-terminal part of the protein, which polymerizes and forms the CARD8 inflammasome. Constitutes the active part of the CARD8 inflammasome. In absence of pathogens and other damage-associated signals, interacts with the N-terminal part of CARD8 (Caspase recruitment domain-containing protein 8, N-terminus), preventing activation of the CARD8 inflammasome. In response to pathogen-associated signals, the N-terminal part of CARD8 is degraded by the proteasome, releasing this form, which polymerizes to form the CARD8 inflammasome complex: the CARD8 inflammasome complex then directly recruits pro-caspase-1 (proCASP1) and promotes caspase-1 (CASP1) activation, leading to gasdermin-D (GSDMD) cleavage and subsequent pyroptosis. The polypeptide is Caspase recruitment domain-containing protein 8 (Homo sapiens (Human)).